The chain runs to 273 residues: Putative ankyrin repeat protein RBE_0317 (273 aa).

ANK repeat units lie at residues 31 to 60, 93 to 123, 127 to 157, 161 to 191, and 195 to 225; these read LGKE…DFYS, NGNT…EVNT, GGNS…NVNE, YGDT…DVNE, and QGET…DTKQ.

The protein is Putative ankyrin repeat protein RBE_0317 of Rickettsia bellii (strain RML369-C).